The sequence spans 635 residues: Biosynthetic arginine decarboxylase (635 aa).

An N6-(pyridoxal phosphate)lysine modification is found at K100. 282-292 (LDIGGGLGVDY) contacts substrate.

The protein belongs to the Orn/Lys/Arg decarboxylase class-II family. SpeA subfamily. Requires Mg(2+) as cofactor. Pyridoxal 5'-phosphate is required as a cofactor.

It catalyses the reaction L-arginine + H(+) = agmatine + CO2. The protein operates within amine and polyamine biosynthesis; agmatine biosynthesis; agmatine from L-arginine: step 1/1. Functionally, catalyzes the biosynthesis of agmatine from arginine. The polypeptide is Biosynthetic arginine decarboxylase (Geobacter sp. (strain M21)).